The sequence spans 724 residues: Ribosomal RNA processing protein 1 homolog B (724 aa).

The tract at residues 331–576 (NGAPLSSAED…SKKKKKTMKL (246 aa)) is disordered. Phosphoserine occurs at positions 336 and 370. Over residues 373-386 (HIHKKKRKKRKRSH) the composition is skewed to basic residues. Ser-432 and Ser-438 each carry phosphoserine. Basic residues predominate over residues 448-461 (HNKRKRPRKKKLRA). A compositionally biased stretch (low complexity) spans 483–496 (SGHSQSSAAHISSS). At Ser-494 the chain carries Phosphoserine. Polar residues-rich tracts occupy residues 513-528 (DSSSDLPVQKSGTPTS) and 548-564 (KTASSTLDPCDPSSQKP). At Lys-618 the chain carries N6-acetyllysine. A disordered region spans residues 625–649 (AKNSSATRPQGPAGQLNKTPSSSKK). Over residues 640 to 649 (LNKTPSSSKK) the composition is skewed to polar residues. 2 positions are modified to phosphoserine: Ser-668 and Ser-672. Position 678 is a citrulline (Arg-678). The segment at 687 to 724 (PLHGVLKTATSSPASTPLSPMRLPATTPKRRPRAADFF) is disordered. Position 694 is a phosphothreonine (Thr-694). A compositionally biased stretch (low complexity) spans 694 to 706 (TATSSPASTPLSP). Ser-698 and Ser-701 each carry phosphoserine.

This sequence belongs to the RRP1 family. Interacts with the transcriptional activator E2F1. Interacts with serine/threonine-protein phosphatase PP1 subunits PPP1CB and PPP1CC but not with PPP1CA. Interacts with 60S ribosomal proteins RPL5 and RPL27, ribosomal processing protein RRP1/NNP1 and other nucleolar proteins including NOP2/NOL1 and FBL. Also interacts with nucleolar protein NPM1/B23. Interacts with splicing factor SRSF1 and LUC7L3/CROP. Interacts with GTPase activator SIPA1. Interacts with H1-10, NCL, PARP1, TRIM28 and YBX3. Citrullinated by PADI4.

Its subcellular location is the nucleus. It localises to the nucleolus. It is found in the nucleoplasm. The protein resides in the chromosome. Functionally, positively regulates DNA damage-induced apoptosis by acting as a transcriptional coactivator of proapoptotic target genes of the transcriptional activator E2F1. Likely to play a role in ribosome biogenesis by targeting serine/threonine protein phosphatase PP1 to the nucleolus. Involved in regulation of mRNA splicing. Inhibits SIPA1 GTPase activity. Involved in regulating expression of extracellular matrix genes. Associates with chromatin and may play a role in modulating chromatin structure. In Mus musculus (Mouse), this protein is Ribosomal RNA processing protein 1 homolog B (Rrp1b).